The following is a 454-amino-acid chain: Transcription factor bHLH123 (454 aa).

A compositionally biased stretch (low complexity) spans 101–113 (SNANANTTSSTSS). Disordered stretches follow at residues 101–127 (SNAN…HHQA), 185–228 (ATTT…QFGS), 270–348 (AAAG…KRKE), and 398–417 (GASL…VSEE). Polar residues-rich tracts occupy residues 185–195 (ATTTTPNSSSG) and 207–228 (SSDQ…QFGS). Residues 303-324 (EQPKNISEIRDSSSNEVKRGGN) show a composition bias toward basic and acidic residues. Residues 334 to 383 (KSEAASPSPAFKRKEKMGDRIAALQQLVSPFGKTDAASVLSEAIEYIKFL) enclose the bHLH domain.

In terms of assembly, homodimer.

Its subcellular location is the nucleus. In Arabidopsis thaliana (Mouse-ear cress), this protein is Transcription factor bHLH123 (BHLH123).